The primary structure comprises 173 residues: Photosystem I assembly protein Ycf3 (173 aa).

3 TPR repeats span residues alanine 35–proline 68, serine 72–methionine 105, and glycine 120–asparagine 153.

This sequence belongs to the Ycf3 family.

The protein resides in the cellular thylakoid membrane. Its function is as follows. Essential for the assembly of the photosystem I (PSI) complex. May act as a chaperone-like factor to guide the assembly of the PSI subunits. The chain is Photosystem I assembly protein Ycf3 from Synechocystis sp. (strain ATCC 27184 / PCC 6803 / Kazusa).